Reading from the N-terminus, the 688-residue chain is Methionine--tRNA ligase (688 aa).

A 'HIGH' region motif is present at residues 13–23 (PYANGNFHIGH). Cysteine 144, cysteine 147, cysteine 157, and cysteine 160 together coordinate Zn(2+). The 'KMSKS' region motif lies at 342–346 (KMSKS). Lysine 345 lines the ATP pocket. Residues 582-688 (DFAKVDLRIA…PGAQPGMRIH (107 aa)) form the tRNA-binding domain.

Belongs to the class-I aminoacyl-tRNA synthetase family. MetG type 1 subfamily. Homodimer. Requires Zn(2+) as cofactor.

The protein localises to the cytoplasm. It carries out the reaction tRNA(Met) + L-methionine + ATP = L-methionyl-tRNA(Met) + AMP + diphosphate. Its function is as follows. Is required not only for elongation of protein synthesis but also for the initiation of all mRNA translation through initiator tRNA(fMet) aminoacylation. The chain is Methionine--tRNA ligase from Acidovorax sp. (strain JS42).